Consider the following 258-residue polypeptide: Leucyl/phenylalanyl-tRNA--protein transferase (258 aa).

Positions 199-220 are disordered; that stretch reads GGSDGPAPDQSIGMSSSGGVSD. Residues 209–220 are compositionally biased toward low complexity; that stretch reads SIGMSSSGGVSD.

Belongs to the L/F-transferase family.

Its subcellular location is the cytoplasm. The enzyme catalyses N-terminal L-lysyl-[protein] + L-leucyl-tRNA(Leu) = N-terminal L-leucyl-L-lysyl-[protein] + tRNA(Leu) + H(+). It catalyses the reaction N-terminal L-arginyl-[protein] + L-leucyl-tRNA(Leu) = N-terminal L-leucyl-L-arginyl-[protein] + tRNA(Leu) + H(+). The catalysed reaction is L-phenylalanyl-tRNA(Phe) + an N-terminal L-alpha-aminoacyl-[protein] = an N-terminal L-phenylalanyl-L-alpha-aminoacyl-[protein] + tRNA(Phe). Functionally, functions in the N-end rule pathway of protein degradation where it conjugates Leu, Phe and, less efficiently, Met from aminoacyl-tRNAs to the N-termini of proteins containing an N-terminal arginine or lysine. The sequence is that of Leucyl/phenylalanyl-tRNA--protein transferase from Hyphomonas neptunium (strain ATCC 15444).